Here is a 163-residue protein sequence, read N- to C-terminus: Phosphopantetheine adenylyltransferase (163 aa).

A substrate-binding site is contributed by Ser11. ATP-binding positions include 11–12 (SF) and His19. Substrate contacts are provided by Lys43, Leu75, and Arg89. Residues 90–92 (GLR), Glu100, and 125–131 (FGYLSSS) contribute to the ATP site.

Belongs to the bacterial CoaD family. In terms of assembly, homohexamer. It depends on Mg(2+) as a cofactor.

The protein localises to the cytoplasm. It catalyses the reaction (R)-4'-phosphopantetheine + ATP + H(+) = 3'-dephospho-CoA + diphosphate. It participates in cofactor biosynthesis; coenzyme A biosynthesis; CoA from (R)-pantothenate: step 4/5. Functionally, reversibly transfers an adenylyl group from ATP to 4'-phosphopantetheine, yielding dephospho-CoA (dPCoA) and pyrophosphate. The polypeptide is Phosphopantetheine adenylyltransferase (Geobacter metallireducens (strain ATCC 53774 / DSM 7210 / GS-15)).